The sequence spans 458 residues: Probable mitochondrial chaperone BCS1-B (458 aa).

The Mitochondrial intermembrane segment spans residues 1 to 26; it reads MENVITNNNKGLPKSILKFIPEPIQP. A helical membrane pass occupies residues 27–47; that stretch reads LFENPFFSAGFGLIGVGSILA. At 48-458 the chain is on the mitochondrial matrix side; the sequence is MGRKGFQQAM…INNLNELIKK (411 aa). 248–255 is a binding site for ATP; it reads GPPGTGKS.

This sequence belongs to the AAA ATPase family. BCS1 subfamily.

Its subcellular location is the mitochondrion inner membrane. It carries out the reaction ATP + H2O = ADP + phosphate + H(+). Its function is as follows. Chaperone necessary for the assembly of mitochondrial respiratory chain complex III. This is Probable mitochondrial chaperone BCS1-B (bcsl1b) from Dictyostelium discoideum (Social amoeba).